A 205-amino-acid chain; its full sequence is MASDHQTQAGKPQPLNPKIIIFEQENFQGHSHELSGPCPNLKETGMEKAGSVLVQAGPWVGYEQANCKGEQFVFEKGEYPRWDSWTSSRRTDSLSSLRPIKVDSQEHKIILYENPNFTGKKMEIVDDDVPSFHAHGYQEKVSSVRVQSGTWVGYQYPGYRGLQYLLEKGDYKDNSDFGAPHPQVQSVRRIRDMQWHQRGAFHPSS.

At Ala-2 the chain carries N-acetylalanine. An N-terminal arm region spans residues 2-16 (ASDHQTQAGKPQPLN). Beta/gamma crystallin 'Greek key' domains lie at 17 to 56 (PKII…LVQA) and 57 to 101 (GPWV…RPIK). A connecting peptide region spans residues 102–106 (VDSQE). Beta/gamma crystallin 'Greek key' domains lie at 107–148 (HKII…RVQS) and 149–191 (GTWV…RRIR). The segment at 193-205 (MQWHQRGAFHPSS) is C-terminal arm.

It belongs to the beta/gamma-crystallin family. In terms of assembly, homo/heterodimer, or complexes of higher-order. The structure of beta-crystallin oligomers seems to be stabilized through interactions between the N-terminal arms.

Functionally, crystallins are the dominant structural components of the vertebrate eye lens. The protein is Beta-crystallin B2 (CRYBB2) of Mesocricetus auratus (Golden hamster).